We begin with the raw amino-acid sequence, 67 residues long: Beta-defensin 103A (67 aa).

Positions 1–22 (MRIHYLLFTLLFLFLVPVPGHG) are cleaved as a signal peptide. Disulfide bonds link Cys-33–Cys-62, Cys-40–Cys-55, and Cys-45–Cys-63.

The protein belongs to the beta-defensin family.

The protein localises to the secreted. Functionally, exhibits antimicrobial activity against Gram-positive and Gram-negative bacteria. In Gorilla gorilla gorilla (Western lowland gorilla), this protein is Beta-defensin 103A (DEFB103A).